The sequence spans 757 residues: Glutathione biosynthesis bifunctional protein GshAB (757 aa).

The segment at 1–337 (MKIQHIIHEN…LGKARLAEVA (337 aa)) is glutamate--cysteine ligase. Residues 494 to 753 (KKVLQKAGFN…LTQNVIKMLF (260 aa)) form the ATP-grasp domain. Residue 521 to 580 (ALFENRAVVIKPKSTNYGLGITIFQQGVQNREDFAKALEIAFREDKEVMVEDYLVGTEYR) participates in ATP binding. Aspartate 702, glutamate 723, and asparagine 725 together coordinate Mg(2+). Residues aspartate 702, glutamate 723, and asparagine 725 each coordinate Mn(2+).

The protein in the N-terminal section; belongs to the glutamate--cysteine ligase type 1 family. Type 2 subfamily. Monomer. The cofactor is Mg(2+). Mn(2+) serves as cofactor.

It carries out the reaction L-cysteine + L-glutamate + ATP = gamma-L-glutamyl-L-cysteine + ADP + phosphate + H(+). The catalysed reaction is gamma-L-glutamyl-L-cysteine + glycine + ATP = glutathione + ADP + phosphate + H(+). The protein operates within sulfur metabolism; glutathione biosynthesis; glutathione from L-cysteine and L-glutamate: step 1/2. It functions in the pathway sulfur metabolism; glutathione biosynthesis; glutathione from L-cysteine and L-glutamate: step 2/2. Functionally, synthesizes glutathione from L-glutamate and L-cysteine via gamma-L-glutamyl-L-cysteine. The chain is Glutathione biosynthesis bifunctional protein GshAB from Pasteurella multocida (strain Pm70).